Consider the following 653-residue polypeptide: tRNA 5-methylaminomethyl-2-thiouridine biosynthesis bifunctional protein MnmC (653 aa).

Residues 1-233 (MKTAPITPGR…KRDITVARFT (233 aa)) are tRNA (mnm(5)s(2)U34)-methyltransferase. The interval 258 to 653 (IGAGLAGCAA…YALPRWRSDS (396 aa)) is FAD-dependent cmnm(5)s(2)U34 oxidoreductase.

It in the N-terminal section; belongs to the methyltransferase superfamily. tRNA (mnm(5)s(2)U34)-methyltransferase family. The protein in the C-terminal section; belongs to the DAO family. The cofactor is FAD.

The protein localises to the cytoplasm. The catalysed reaction is 5-aminomethyl-2-thiouridine(34) in tRNA + S-adenosyl-L-methionine = 5-methylaminomethyl-2-thiouridine(34) in tRNA + S-adenosyl-L-homocysteine + H(+). Functionally, catalyzes the last two steps in the biosynthesis of 5-methylaminomethyl-2-thiouridine (mnm(5)s(2)U) at the wobble position (U34) in tRNA. Catalyzes the FAD-dependent demodification of cmnm(5)s(2)U34 to nm(5)s(2)U34, followed by the transfer of a methyl group from S-adenosyl-L-methionine to nm(5)s(2)U34, to form mnm(5)s(2)U34. The protein is tRNA 5-methylaminomethyl-2-thiouridine biosynthesis bifunctional protein MnmC of Methylibium petroleiphilum (strain ATCC BAA-1232 / LMG 22953 / PM1).